The following is a 284-amino-acid chain: Cystinosin homolog (284 aa).

7 helical membrane-spanning segments follow: residues 3-23 (ALSIISIIIGWIYFACWSLSF), 37-57 (IGLSFDFLLFNITGYACYSVF), 86-106 (IAFAIHGFVLTAITIIQCFIY), 116-136 (LGIGIATLIWVSLIVMTILGF), 139-159 (VFTWLWVINYYSYVKLFITFI), 181-201 (NVLLDFSGGVLSLLQMFLDVA), and 216-236 (LGLSLFSIAFDILFIIQHYIL). A PQ-loop 1 domain is found at 4-70 (LSIISIIIGW…LYFDKLVKNE (67 aa)). The PQ-loop 2 domain maps to 154 to 208 (LFITFIKYIPQAYLNFKNKSTSGWSVHNVLLDFSGGVLSLLQMFLDVADSGNWNI). The tract at residues 247-269 (NLNDNNIPNNNNNNNNNINNNTP) is disordered.

It belongs to the cystinosin family.

The protein localises to the lysosome membrane. It carries out the reaction L-cystine(out) + H(+)(out) = L-cystine(in) + H(+)(in). Cystine/H(+) symporter that mediates export of cystine, the oxidized dimer of cysteine, from lysosomes. The polypeptide is Cystinosin homolog (ctns) (Dictyostelium discoideum (Social amoeba)).